Here is a 1459-residue protein sequence, read N- to C-terminus: ARF guanine-nucleotide exchange factor 2 (1459 aa).

Phosphoserine is present on residues S46 and S284. The SEC7 domain occupies 570-714; it reads FNEKPKKGIP…IIMLNTDLHN (145 aa). Positions 1412–1459 are disordered; sequence EKGNGSSSHGSAHEQTPESNDVEIEATAPIDDNTDDDNKPKLSDVEKD. Residues 1447–1459 are compositionally biased toward basic and acidic residues; the sequence is DDNKPKLSDVEKD.

As to quaternary structure, interacts (via SEC7 domain) with DRS2 (via C-terminus); the interaction is direct. Interacts with GMH1.

The protein resides in the cytoplasm. It is found in the cytosol. Its subcellular location is the membrane. The protein localises to the golgi apparatus membrane. Its function is as follows. Activates the ARF proteins by exchanging bound GDP for free GTP. Plays a role in maintaining mitochondrial morphology. Stimulates DRS2 flippase activity. This chain is ARF guanine-nucleotide exchange factor 2 (GEA2), found in Saccharomyces cerevisiae (strain ATCC 204508 / S288c) (Baker's yeast).